The sequence spans 455 residues: Kynureninase (455 aa).

Residues Leu94, Thr95, 122 to 125 (FPSD), Asp208, His211, and Tyr233 contribute to the pyridoxal 5'-phosphate site. Residue Lys234 is modified to N6-(pyridoxal phosphate)lysine. Trp275 and Asn303 together coordinate pyridoxal 5'-phosphate.

It belongs to the kynureninase family. Homodimer. Pyridoxal 5'-phosphate is required as a cofactor.

The protein resides in the cytoplasm. The catalysed reaction is L-kynurenine + H2O = anthranilate + L-alanine + H(+). The enzyme catalyses 3-hydroxy-L-kynurenine + H2O = 3-hydroxyanthranilate + L-alanine + H(+). The protein operates within amino-acid degradation; L-kynurenine degradation; L-alanine and anthranilate from L-kynurenine: step 1/1. Its pathway is cofactor biosynthesis; NAD(+) biosynthesis; quinolinate from L-kynurenine: step 2/3. Catalyzes the cleavage of L-kynurenine (L-Kyn) and L-3-hydroxykynurenine (L-3OHKyn) into anthranilic acid (AA) and 3-hydroxyanthranilic acid (3-OHAA), respectively. This is Kynureninase from Vanderwaltozyma polyspora (strain ATCC 22028 / DSM 70294 / BCRC 21397 / CBS 2163 / NBRC 10782 / NRRL Y-8283 / UCD 57-17) (Kluyveromyces polysporus).